Here is a 262-residue protein sequence, read N- to C-terminus: Triosephosphate isomerase (262 aa).

13 to 15 lines the substrate pocket; it reads NWK. Residue H103 is the Electrophile of the active site. Catalysis depends on E175, which acts as the Proton acceptor. Substrate contacts are provided by residues G181, S221, and 242–243; that span reads GG.

It belongs to the triosephosphate isomerase family. Homodimer.

It localises to the cytoplasm. It catalyses the reaction D-glyceraldehyde 3-phosphate = dihydroxyacetone phosphate. Its pathway is carbohydrate biosynthesis; gluconeogenesis. The protein operates within carbohydrate degradation; glycolysis; D-glyceraldehyde 3-phosphate from glycerone phosphate: step 1/1. Its function is as follows. Involved in the gluconeogenesis. Catalyzes stereospecifically the conversion of dihydroxyacetone phosphate (DHAP) to D-glyceraldehyde-3-phosphate (G3P). The protein is Triosephosphate isomerase of Corynebacterium efficiens (strain DSM 44549 / YS-314 / AJ 12310 / JCM 11189 / NBRC 100395).